The following is a 1521-amino-acid chain: Suppressor of Ty 6 homolog (1521 aa).

The tract at residues 1–238 (MDFIDNQAEE…EEIIEDDGEG (238 aa)) is disordered. Residues 26–41 (KKMKMAKEKSKRKKKM) are compositionally biased toward basic residues. The Nuclear localization signal signature appears at 26–42 (KKMKMAKEKSKRKKKMV). Composition is skewed to acidic residues over residues 45–56 (SDEDEDDDDDEE) and 67–76 (ADDDDEEEDA). A compositionally biased stretch (basic and acidic residues) spans 77 to 89 (KSEKSEKSRHSGE). Residues 90 to 99 (DELDDEDLDL) show a composition bias toward acidic residues. The segment covering 126-157 (PIRRPNHEDDDLLSERGSDDGDRRKDRGRGDR) has biased composition (basic and acidic residues). Composition is skewed to acidic residues over residues 166 to 176 (RSEDDFIEDDG), 191 to 200 (NLPEGAEDDA), and 209 to 238 (FNLDEFYDDDDGEDGLEDEEEEIIEDDGEG). Residues 1183-1252 (LGDSRQGGCP…ERFSLFLSCK (70 aa)) form the S1 motif domain. One can recognise an SH2 domain in the interval 1300–1389 (HPNFHNVSYE…IARFVQPMIQ (90 aa)).

The protein belongs to the SPT6 family. As to quaternary structure, interacts with glp-1 and lin-12. In terms of tissue distribution, abundant in embryos, and less abundant in larvae.

The protein resides in the nucleus. Its function is as follows. Histone H3-H4 chaperone that plays a role in maintenance of chromatin structure during RNA polymerase II transcription elongation. Required for several aspects of morphogenesis of C.elegans, including regulation of division in the germline and gut and specification of ventral-uterine precursor cell fate. The chain is Suppressor of Ty 6 homolog (emb-5) from Caenorhabditis elegans.